Reading from the N-terminus, the 259-residue chain is Pycsar effector protein RsmPycTIR (259 aa).

M1–R120 serves as a coordination point for a nucleoside 3',5'-cyclic phosphate. The TIR-like stretch occupies residues L126–S229. 3 helical membrane-spanning segments follow: residues G136 to Y156, V169 to V189, and Q234 to I254.

It localises to the cell inner membrane. It carries out the reaction NAD(+) + H2O = ADP-D-ribose + nicotinamide + H(+). In terms of biological role, pycsar (pyrimidine cyclase system for antiphage resistance) provides immunity against bacteriophage. The pyrimidine cyclase (PycC) synthesizes cyclic nucleotides in response to infection; these serve as specific second messenger signals. The signals activate the adjacent effector, leading to bacterial cell death and abortive phage infection. A clade B Pycsar system. The effector gene of a two-gene Pycsar system. Expression of this and adjacent uridylate cyclase RsmPycC (AC A0A1V0HUX5) probably confers resistance to bacteriophage. The genes are probably only expressed in response to bacteriophage infection. Probably only responds to cUMP (produced by its cognate NTP cyclase), it may act by degrading NAD(+) and/or by impairing membrane integrity. This is Pycsar effector protein RsmPycTIR from Rhodovulum sp. (strain MB263).